The primary structure comprises 259 residues: Secretion system apparatus protein SsaT (259 aa).

6 helical membrane passes run 9–29, 35–55, 78–98, 127–147, 185–205, and 214–234; these read LIAL…LPLL, GAAL…LPII, VIIG…VDMA, LLFS…EFIL, ISFS…LGLL, and VFFF…LISF.

Belongs to the FliR/MopE/SpaR family.

The protein resides in the cell membrane. In terms of biological role, part of a type III secretion system. In Salmonella typhimurium (strain LT2 / SGSC1412 / ATCC 700720), this protein is Secretion system apparatus protein SsaT (ssaT).